A 297-amino-acid chain; its full sequence is uncharacterized protein (297 aa).

4 disordered regions span residues 12-43 (QNNNNNTNNNNNNNNPKASILKNNNNDNTNDN), 65-85 (VPNSINVNTSSSGNKNGDKPI), 122-151 (KVSTTTTTTSSTSKPILPQTITKPNKTNET), and 265-297 (SRLSSNNNNNNNNNNNNNNNNSNLLFFFDDQNN). Residues 65-79 (VPNSINVNTSSSGNK) show a composition bias toward polar residues. Residues 122–135 (KVSTTTTTTSSTSK) show a composition bias toward low complexity. Polar residues predominate over residues 140–151 (QTITKPNKTNET). Residues 268–287 (SSNNNNNNNNNNNNNNNNSN) show a composition bias toward low complexity.

This is an uncharacterized protein from Dictyostelium discoideum (Social amoeba).